Consider the following 314-residue polypeptide: tRNA pseudouridine synthase B (314 aa).

His-43 lines the substrate pocket. Asp-48 acts as the Nucleophile in catalysis. Residues Tyr-76, Tyr-179, and Leu-200 each contribute to the substrate site.

It belongs to the pseudouridine synthase TruB family. Type 1 subfamily.

It carries out the reaction uridine(55) in tRNA = pseudouridine(55) in tRNA. In terms of biological role, responsible for synthesis of pseudouridine from uracil-55 in the psi GC loop of transfer RNAs. The sequence is that of tRNA pseudouridine synthase B from Salmonella choleraesuis (strain SC-B67).